Consider the following 423-residue polypeptide: Aspartate aminotransferase, mitochondrial (423 aa).

The transit peptide at 1–22 (MALLQSRLLLSAPRRAAATARA) directs the protein to the mitochondrion. The substrate site is built by glycine 58, tryptophan 155, and asparagine 208. Lysine 272 is subject to N6-(pyridoxal phosphate)lysine. Residue arginine 400 participates in substrate binding.

It belongs to the class-I pyridoxal-phosphate-dependent aminotransferase family. Homodimer. The cofactor is pyridoxal 5'-phosphate. Detected in heart (at protein level).

It is found in the mitochondrion matrix. It catalyses the reaction L-aspartate + 2-oxoglutarate = oxaloacetate + L-glutamate. The enzyme catalyses L-kynurenine + 2-oxoglutarate = kynurenate + L-glutamate + H2O. Functionally, catalyzes the irreversible transamination of the L-tryptophan metabolite L-kynurenine to form kynurenic acid (KA). As a member of the malate-aspartate shuttle, it has a key role in the intracellular NAD(H) redox balance. Is important for metabolite exchange between mitochondria and cytosol, and for amino acid metabolism. The polypeptide is Aspartate aminotransferase, mitochondrial (GOT2) (Gallus gallus (Chicken)).